A 246-amino-acid chain; its full sequence is Trypsin V-A (246 aa).

Residues 1–15 (MKICIFFTLLGTVAA) form the signal peptide. Positions 16–24 (FPTEDNDDR) are cleaved as a propeptide — activation peptide. The region spanning 25-244 (IVGGYTCQEH…YLNWIHQTIA (220 aa)) is the Peptidase S1 domain. Disulfide bonds link C31/C160, C49/C65, C133/C233, C140/C206, C171/C185, and C196/C220. The active-site Charge relay system is the H64. Ca(2+) contacts are provided by E76, N78, and E86. Catalysis depends on D108, which acts as the Charge relay system. The Charge relay system role is filled by S200.

It belongs to the peptidase S1 family. It depends on Ca(2+) as a cofactor.

It is found in the secreted. The protein localises to the extracellular space. It carries out the reaction Preferential cleavage: Arg-|-Xaa, Lys-|-Xaa.. The chain is Trypsin V-A from Rattus norvegicus (Rat).